Here is a 1207-residue protein sequence, read N- to C-terminus: AP-3 complex subunit delta-1 (1207 aa).

Ala-2 is modified (N-acetylalanine). HEAT repeat units lie at residues 34–71 (KYISQCIDEIKQELKQDNIAVKANAVCKLTYLQMLGYD), 142–179 (DLARDLANDIMTLMSHTKPYIRKKAVLIMYKVFLKYPE), 180–216 (SLRPAFPRLKEKLEDPDPGVQSAAVNVICELARRNPK), 218–254 (YLSLAPLFFKLMTSSTNNWVLIKIIKLFGALTPLEPR), 257–296 (KKLIEPLTNLIHSTSAMSLLYECVNTVIAVLISLSSGMPN), 298–336 (SASIQLCVQKLRILIEDSDQNLKYLGLLAMSKILRTHPK), 337–373 (SVQAHKDLVLQCLDDKDESIRLRALDLLYGMVSKKNL), 375–409 (EIVKKLMTHVDKAEGTTYRDELLTKIIDICSQSNY), and 521–558 (VYVQNVVKLYAAILQQKEQAADTSAAQEVTQLLVERLP). Disordered regions lie at residues 630–695 (PLSD…RYQD) and 731–970 (RRHR…EEPL). Phosphoserine is present on residues Ser-632, Ser-634, and Ser-636. Residues 648 to 675 (EEQRHTKPRAPEADEQELARRREARRQE) are compositionally biased toward basic and acidic residues. Positions 659–679 (EADEQELARRREARRQEQANN) form a coiled coil. Ser-688 bears the Phosphoserine mark. A coiled-coil region spans residues 725–752 (VKLEEERRHRQRLEKDKRKKKKRERERR). A compositionally biased stretch (basic and acidic residues) spans 731–740 (RRHRQRLEKD). The segment covering 741 to 759 (KRKKKKRERERRGTRRHSS) has biased composition (basic residues). 2 positions are modified to phosphoserine: Ser-758 and Ser-759. Position 762 is a phosphothreonine (Thr-762). Phosphoserine occurs at positions 764, 788, and 829. A compositionally biased stretch (acidic residues) spans 777–794 (VTEEMPENALPSDEDDKD). The segment covering 795-840 (PNDPYRALDIDLDKPLADSEKLPVQKHRNAETSKSPEKEDVPLVEK) has biased composition (basic and acidic residues). Residues 841–854 (KSKKPKKKEKKHKE) show a composition bias toward basic residues. The stretch at 846–870 (KKKEKKHKEKEREKKKKEVEKGEDL) forms a coiled coil. Basic and acidic residues-rich tracts occupy residues 855 to 869 (KEREKKKKEVEKGED) and 899 to 908 (EGQEEPRGEE). Over residues 923-933 (PSKHKKKKHKK) the composition is skewed to basic residues. The segment covering 952–969 (ADEEAAEPVENGTLEEEP) has biased composition (acidic residues).

It belongs to the adaptor complexes large subunit family. As to quaternary structure, AP-3 associates with the BLOC-1 complex. Adaptor protein complex 3 (AP-3) is a heterotetramer composed of two large adaptins (delta-type subunit AP3D1 and beta-type subunit AP3B1 or AP3B2), a medium adaptin (mu-type subunit AP3M1 or AP3M2) and a small adaptin (sigma-type subunit APS1 or AP3S2). Interacts with SLC30A2. Interacts with CLN3 (via dileucine motif); this interaction facilitates lysosomal targeting.

The protein localises to the cytoplasm. It is found in the golgi apparatus membrane. In terms of biological role, part of the AP-3 complex, an adaptor-related complex which is not clathrin-associated. The complex is associated with the Golgi region as well as more peripheral structures. It facilitates the budding of vesicles from the Golgi membrane and may be directly involved in trafficking to lysosomes. Involved in process of CD8+ T-cell and NK cell degranulation. In concert with the BLOC-1 complex, AP-3 is required to target cargos into vesicles assembled at cell bodies for delivery into neurites and nerve terminals. In Bos taurus (Bovine), this protein is AP-3 complex subunit delta-1 (AP3D1).